The chain runs to 123 residues: Large ribosomal subunit protein eL8 (123 aa).

The protein belongs to the eukaryotic ribosomal protein eL8 family. In terms of assembly, part of the 50S ribosomal subunit. Probably part of the RNase P complex.

It localises to the cytoplasm. Its function is as follows. Multifunctional RNA-binding protein that recognizes the K-turn motif in ribosomal RNA, the RNA component of RNase P, box H/ACA, box C/D and box C'/D' sRNAs. The chain is Large ribosomal subunit protein eL8 from Methanosphaera stadtmanae (strain ATCC 43021 / DSM 3091 / JCM 11832 / MCB-3).